The following is a 429-amino-acid chain: UPF0242 protein CT_616 (429 aa).

It belongs to the UPF0242 family.

The protein is UPF0242 protein CT_616 of Chlamydia trachomatis serovar D (strain ATCC VR-885 / DSM 19411 / UW-3/Cx).